A 592-amino-acid chain; its full sequence is Aspartate--tRNA ligase (592 aa).

Residue glutamate 171 participates in L-aspartate binding. The tract at residues 195 to 198 (QLFK) is aspartate. L-aspartate is bound at residue arginine 217. ATP is bound by residues 217 to 219 (RDE) and glutamine 226. An L-aspartate-binding site is contributed by histidine 448. An ATP-binding site is contributed by glutamate 482. Residue arginine 489 coordinates L-aspartate. 534 to 537 (GLDR) is a binding site for ATP.

Belongs to the class-II aminoacyl-tRNA synthetase family. Type 1 subfamily. In terms of assembly, homodimer.

The protein resides in the cytoplasm. The catalysed reaction is tRNA(Asp) + L-aspartate + ATP = L-aspartyl-tRNA(Asp) + AMP + diphosphate. In terms of biological role, catalyzes the attachment of L-aspartate to tRNA(Asp) in a two-step reaction: L-aspartate is first activated by ATP to form Asp-AMP and then transferred to the acceptor end of tRNA(Asp). This Vibrio atlanticus (strain LGP32) (Vibrio splendidus (strain Mel32)) protein is Aspartate--tRNA ligase.